An 89-amino-acid polypeptide reads, in one-letter code: Small ribosomal subunit protein uS15 (89 aa).

The protein belongs to the universal ribosomal protein uS15 family. In terms of assembly, part of the 30S ribosomal subunit. Forms a bridge to the 50S subunit in the 70S ribosome, contacting the 23S rRNA.

In terms of biological role, one of the primary rRNA binding proteins, it binds directly to 16S rRNA where it helps nucleate assembly of the platform of the 30S subunit by binding and bridging several RNA helices of the 16S rRNA. Functionally, forms an intersubunit bridge (bridge B4) with the 23S rRNA of the 50S subunit in the ribosome. This Maridesulfovibrio salexigens (strain ATCC 14822 / DSM 2638 / NCIMB 8403 / VKM B-1763) (Desulfovibrio salexigens) protein is Small ribosomal subunit protein uS15.